A 501-amino-acid chain; its full sequence is MVAALSSLAAALGAGLHPKTLLLGAVAFLFFAYFLKTRRPKNYPPGPWRLPFLGNLFTLDMEKSHLQLQQFVKKYGNLFCLDLAGKSIVIVTGLPLIKEVLVHMDQNFINRPVPPIRERSFKKNGLIMSSGQLWKEQRRFALMTLRNFGLGKKSLEERIQEEARHLTEAMEKEGGQPFDAHFKINNAVSNIICSITFGERFEYHDGQFQELLKLFDEVMYLEASMLCQLYNIFPWIMKFLPGAHQTLFSNWKKLELFVSRMLENHKKDWNPAETRDFIDAYLKEMSKYPGSATSSFNEENLICSTLDLFLAGTETTSDMRWGLLFMALYPEIQEKVHAEIDSVIGQWQQPSMASRESLPYTNAVIHEVQRMGNILPLNVPREVTVDTTLAGYHLPKGTVVLTNLTALHKDPEEWATPDTFNPEHFLENGQFKKKEAFIPFSIGKRACLGEQLAKSELFIFFTSLMQKFTFKPPSDEKLTLNFRMGITLSPVKHRICAIPRA.

C447 is a heme binding site.

This sequence belongs to the cytochrome P450 family. It depends on heme as a cofactor. In terms of tissue distribution, small intestine.

The protein resides in the endoplasmic reticulum membrane. The protein localises to the microsome membrane. The enzyme catalyses an organic molecule + reduced [NADPH--hemoprotein reductase] + O2 = an alcohol + oxidized [NADPH--hemoprotein reductase] + H2O + H(+). Its function is as follows. Catalyzes the N-demethylation of benzphetamine to formaldehyde. The protein is Cytochrome P450 2J1 (CYP2J1) of Oryctolagus cuniculus (Rabbit).